The primary structure comprises 487 residues: MILKEEHPHQSIETAANAARQAQVRWRMAHLKALSRTRTPAHGNCCGRVVSKNHFFKHSRAFLWFLLCNLVMNADAFAHSQLLINVQNQGGEVIQESITSNIGEDLITLEFQKTDGTLITQVIDFRNEVQILKALVLGEEERGQSQYQVMCFATKFNKGDFISSAAMAKLRQKNPHTIRTPEEDKGRETFTMSSWVQLNRSLPITRHLQGLCAEAMDATYVRDVDLKAWAELPGSSISSLEAATEKFPDTLSTRCNEVSSLWAPCLCNLETCIGWYPCGLKYCKGKGVAGADSSGAQQQAQPTNYRCGIKTCRKCTQFTYYVRQKQQCLWDEXRRGELQLMQMRCARRRNGSEFGDDASATCPGGETRAATTTATITGGGAGGSGKDTTAATTTTTNKLRQLLLLVQQQMPFALWSFPVHHISQSHHQSQSQHKPSRQQKQHQHHSQVAPTSHHQSSSSTPPTPSTSSSPPSSSSSSSSSAMAAIVA.

Positions 423-433 (SQSHHQSQSQH) are enriched in low complexity. The interval 423–487 (SQSHHQSQSQ…SSSAMAAIVA (65 aa)) is disordered. Over residues 434-445 (KPSRQQKQHQHH) the composition is skewed to basic residues. A compositionally biased stretch (low complexity) spans 456–480 (SSSSTPPTPSTSSSPPSSSSSSSSS).

The protein belongs to the OAF family. Embryonic expression is in small clusters of cells along posterior margin of most segments, brain and segmentally repeating pattern along midline of nerve cord. Expressed in embryonic, larval and adult gonads of both sexes, and larval imaginal disks.

Its function is as follows. Vital for proper neuronal development and hatching. The protein is Out at first protein (oaf) of Drosophila melanogaster (Fruit fly).